The sequence spans 168 residues: Crossover junction endodeoxyribonuclease RuvC (168 aa).

Catalysis depends on residues Asp-8, Glu-68, and Asp-140. Mg(2+)-binding residues include Asp-8, Glu-68, and Asp-140.

The protein belongs to the RuvC family. Homodimer which binds Holliday junction (HJ) DNA. The HJ becomes 2-fold symmetrical on binding to RuvC with unstacked arms; it has a different conformation from HJ DNA in complex with RuvA. In the full resolvosome a probable DNA-RuvA(4)-RuvB(12)-RuvC(2) complex forms which resolves the HJ. The cofactor is Mg(2+).

It is found in the cytoplasm. It carries out the reaction Endonucleolytic cleavage at a junction such as a reciprocal single-stranded crossover between two homologous DNA duplexes (Holliday junction).. Functionally, the RuvA-RuvB-RuvC complex processes Holliday junction (HJ) DNA during genetic recombination and DNA repair. Endonuclease that resolves HJ intermediates. Cleaves cruciform DNA by making single-stranded nicks across the HJ at symmetrical positions within the homologous arms, yielding a 5'-phosphate and a 3'-hydroxyl group; requires a central core of homology in the junction. The consensus cleavage sequence is 5'-(A/T)TT(C/G)-3'. Cleavage occurs on the 3'-side of the TT dinucleotide at the point of strand exchange. HJ branch migration catalyzed by RuvA-RuvB allows RuvC to scan DNA until it finds its consensus sequence, where it cleaves and resolves the cruciform DNA. This Lawsonia intracellularis (strain PHE/MN1-00) protein is Crossover junction endodeoxyribonuclease RuvC.